Reading from the N-terminus, the 233-residue chain is Leucyl/phenylalanyl-tRNA--protein transferase (233 aa).

It belongs to the L/F-transferase family.

The protein localises to the cytoplasm. The catalysed reaction is N-terminal L-lysyl-[protein] + L-leucyl-tRNA(Leu) = N-terminal L-leucyl-L-lysyl-[protein] + tRNA(Leu) + H(+). It carries out the reaction N-terminal L-arginyl-[protein] + L-leucyl-tRNA(Leu) = N-terminal L-leucyl-L-arginyl-[protein] + tRNA(Leu) + H(+). The enzyme catalyses L-phenylalanyl-tRNA(Phe) + an N-terminal L-alpha-aminoacyl-[protein] = an N-terminal L-phenylalanyl-L-alpha-aminoacyl-[protein] + tRNA(Phe). Its function is as follows. Functions in the N-end rule pathway of protein degradation where it conjugates Leu, Phe and, less efficiently, Met from aminoacyl-tRNAs to the N-termini of proteins containing an N-terminal arginine or lysine. The polypeptide is Leucyl/phenylalanyl-tRNA--protein transferase (Shewanella denitrificans (strain OS217 / ATCC BAA-1090 / DSM 15013)).